A 197-amino-acid chain; its full sequence is RNA-binding protein Rsf1 (197 aa).

The RRM domain maps to 7-80 (TRVYVGNLTD…SQLRVEISKG (74 aa)). Residues 74-197 (RVEISKGRPR…SRSPVGNHRF (124 aa)) are disordered. Residues 89 to 102 (GPMDRGGRRGDFGR) show a composition bias toward basic and acidic residues. At T106 the chain carries Phosphothreonine. Low complexity-rich tracts occupy residues 117-144 (QRGSSGSSSRHTERGYSSGRSGASSYNG) and 166-176 (RYSSGSSASYG). S168, S171, S174, S188, and S190 each carry phosphoserine.

Belongs to the splicing factor SR family. Post-translationally, extensively phosphorylated on serine residues in the RS domain.

The protein localises to the nucleus. In terms of biological role, may control important aspects of development. The sequence is that of RNA-binding protein Rsf1 (Rsf1) from Drosophila melanogaster (Fruit fly).